Here is a 918-residue protein sequence, read N- to C-terminus: Melanoma-associated antigen E1 (918 aa).

3 disordered regions span residues 1 to 140, 154 to 227, and 367 to 388; these read MSLV…GSKA, EQRH…SNGL, and SQMS…ANNP. Residues 8–23 are compositionally biased toward basic residues; it reads SRRRRGGRANARRNNG. 3 stretches are compositionally biased toward polar residues: residues 70–96, 113–126, and 213–227; these read VPPT…SEMP, GLNT…SEGP, and EDPS…SNGL. 2 MAGE domains span residues 459 to 658 and 706 to 897; these read MEQN…YNEA and LESK…YREA. Positions 704 to 918 are interaction with DTNA; the sequence is SRLESKARKL…RRPLIVRNLR (215 aa).

As to quaternary structure, interacts with DTNA. Interacts with TRIM28. Expressed in cell bodies and dendrites of hippocampal and Purkinje neurons. Also expressed in peripheral nerve, where it localizes to the perineurium and myelin (at protein level). Predominantly expressed in brain and at low levels in the heart, liver, kidney, spleen, testis, lung, thymus, placenta and skeletal muscle.

Its subcellular location is the cytoplasm. The protein localises to the perinuclear region. It is found in the nucleus. It localises to the cell membrane. Functionally, may enhance ubiquitin ligase activity of RING-type zinc finger-containing E3 ubiquitin-protein ligases. Proposed to act through recruitment and/or stabilization of the Ubl-conjugating enzyme (E2) at the E3:substrate complex. This is Melanoma-associated antigen E1 (Magee1) from Mus musculus (Mouse).